The chain runs to 52 residues: EGEECESGPCCRNCKFLKEGTICKRARGDDMDDYCNGKTCDCPRNPHKGPAT.

The 50-residue stretch at 1 to 50 folds into the Disintegrin domain; it reads EGEECESGPCCRNCKFLKEGTICKRARGDDMDDYCNGKTCDCPRNPHKGP. Cystine bridges form between Cys-5/Cys-14, Cys-10/Cys-35, Cys-11/Cys-40, and Cys-23/Cys-42. The short motif at 27-29 is the Cell attachment site element; that stretch reads RGD.

Belongs to the venom metalloproteinase (M12B) family. P-II subfamily. P-IIa sub-subfamily. As to quaternary structure, monomer. Expressed by the venom gland.

The protein localises to the secreted. Functionally, inhibits ADP-induced human, canine and rabbit platelet aggregation by binding with high affinity to alpha-IIb/beta-3 (ITGA2B/ITGB3). The chain is Disintegrin multisquamatin from Echis multisquamatus (Central Asian sand viper).